The primary structure comprises 492 residues: Putative cytochrome P450 136 (492 aa).

A heme-binding site is contributed by C439.

The protein belongs to the cytochrome P450 family. Heme serves as cofactor.

This chain is Putative cytochrome P450 136 (cyp136), found in Mycobacterium tuberculosis (strain CDC 1551 / Oshkosh).